Consider the following 268-residue polypeptide: Receptor expression-enhancing protein 2 (268 aa).

Transmembrane regions (helical) follow at residues 1–21 (MVSW…YPAY) and 35–55 (YVKW…ETIT). The disordered stretch occupies residues 170 to 268 (GDDTHTAATL…TTANNVAESP (99 aa)). Residues 180 to 196 (PRAKTATRTVRATPVPA) show a composition bias toward low complexity. A compositionally biased stretch (basic and acidic residues) spans 199 to 216 (ESQHSSRSDDQSDSRTEH). Low complexity predominate over residues 228-248 (RIAITRAAKKPAAAKTEQTTK). Basic residues predominate over residues 249-258 (TVKKAPKKKP).

It belongs to the DP1 family. As to quaternary structure, interacts with odorant receptor proteins.

It localises to the membrane. Functionally, may enhance the cell surface expression of odorant receptors. This Danio rerio (Zebrafish) protein is Receptor expression-enhancing protein 2 (reep2).